Here is an 89-residue protein sequence, read N- to C-terminus: Strongylocin 2 (89 aa).

The N-terminal stretch at 1-22 (MNIRTASFTFIVVMMILSQTMA) is a signal peptide. Residues 23-38 (DRFFNEPEEDDHLVES) constitute a propeptide that is removed on maturation. Residue Trp-39 is modified to 6'-bromotryptophan.

Post-translationally, contains 3 disulfide bonds.

In terms of biological role, has antimicrobial activity against Gram-negative bacteria and Gram-positive bacteria with minimum inhibitory concentration (MIC) between 0.78 uM and 3.13 uM. The chain is Strongylocin 2 from Echinus esculentus (Sea urchin).